Consider the following 264-residue polypeptide: Proliferating cell nuclear antigen 2 (264 aa).

The DNA-binding element occupies 61-80 (RCDRNLSMGMNLGNMSKMLK).

The protein belongs to the PCNA family. Homo- and heterotrimer. Interacts with POLH, ATXR5 and ATXR6.

The protein resides in the nucleus. Its function is as follows. This protein is an auxiliary protein of DNA polymerase delta and is involved in the control of eukaryotic DNA replication by increasing the polymerase's processibility during elongation of the leading strand. May be involved in UV resistance. The sequence is that of Proliferating cell nuclear antigen 2 (PCNA2) from Arabidopsis thaliana (Mouse-ear cress).